Here is a 75-residue protein sequence, read N- to C-terminus: Small ribosomal subunit protein bS18 (75 aa).

It belongs to the bacterial ribosomal protein bS18 family. As to quaternary structure, part of the 30S ribosomal subunit. Forms a tight heterodimer with protein bS6.

Binds as a heterodimer with protein bS6 to the central domain of the 16S rRNA, where it helps stabilize the platform of the 30S subunit. In Cereibacter sphaeroides (strain ATCC 17029 / ATH 2.4.9) (Rhodobacter sphaeroides), this protein is Small ribosomal subunit protein bS18.